Reading from the N-terminus, the 212-residue chain is Large ribosomal subunit protein uL3 (212 aa).

An N5-methylglutamine modification is found at Gln-153.

This sequence belongs to the universal ribosomal protein uL3 family. Part of the 50S ribosomal subunit. Forms a cluster with proteins L14 and L19. In terms of processing, methylated by PrmB.

Its function is as follows. One of the primary rRNA binding proteins, it binds directly near the 3'-end of the 23S rRNA, where it nucleates assembly of the 50S subunit. This Shewanella woodyi (strain ATCC 51908 / MS32) protein is Large ribosomal subunit protein uL3.